Consider the following 599-residue polypeptide: Elongation factor 4 (599 aa).

Residues 5-187 (SHIRNFSIIA…VLIKSVPAPV (183 aa)) form the tr-type G domain. GTP is bound by residues 17–22 (DHGKST) and 134–137 (NKID).

The protein belongs to the TRAFAC class translation factor GTPase superfamily. Classic translation factor GTPase family. LepA subfamily.

Its subcellular location is the cell inner membrane. It catalyses the reaction GTP + H2O = GDP + phosphate + H(+). Its function is as follows. Required for accurate and efficient protein synthesis under certain stress conditions. May act as a fidelity factor of the translation reaction, by catalyzing a one-codon backward translocation of tRNAs on improperly translocated ribosomes. Back-translocation proceeds from a post-translocation (POST) complex to a pre-translocation (PRE) complex, thus giving elongation factor G a second chance to translocate the tRNAs correctly. Binds to ribosomes in a GTP-dependent manner. This Saccharophagus degradans (strain 2-40 / ATCC 43961 / DSM 17024) protein is Elongation factor 4.